Consider the following 436-residue polypeptide: UPF0229 protein Meso_0256 (436 aa).

The segment at 53-110 is disordered; the sequence is PMPARGTSEPTFRPDRSSGERGYILPGNKEFAPGDRLPKPGASGGEGGTGAGRGGSDD. A compositionally biased stretch (gly residues) spans 94–106; it reads ASGGEGGTGAGRG.

Belongs to the UPF0229 family.

In Chelativorans sp. (strain BNC1), this protein is UPF0229 protein Meso_0256.